A 394-amino-acid polypeptide reads, in one-letter code: 1-deoxy-D-xylulose 5-phosphate reductoisomerase (394 aa).

7 residues coordinate NADPH: Thr12, Gly13, Ser14, Ile15, Gly38, Asn41, and Asn132. Residue Lys133 coordinates 1-deoxy-D-xylulose 5-phosphate. An NADPH-binding site is contributed by Glu134. Mn(2+) is bound at residue Asp156. 1-deoxy-D-xylulose 5-phosphate is bound by residues Ser157, Glu158, Ser182, and His205. A Mn(2+)-binding site is contributed by Glu158. An NADPH-binding site is contributed by Gly211. 4 residues coordinate 1-deoxy-D-xylulose 5-phosphate: Ser218, Asn223, Lys224, and Glu227. A Mn(2+)-binding site is contributed by Glu227.

Belongs to the DXR family. It depends on Mg(2+) as a cofactor. The cofactor is Mn(2+).

It carries out the reaction 2-C-methyl-D-erythritol 4-phosphate + NADP(+) = 1-deoxy-D-xylulose 5-phosphate + NADPH + H(+). It functions in the pathway isoprenoid biosynthesis; isopentenyl diphosphate biosynthesis via DXP pathway; isopentenyl diphosphate from 1-deoxy-D-xylulose 5-phosphate: step 1/6. In terms of biological role, catalyzes the NADPH-dependent rearrangement and reduction of 1-deoxy-D-xylulose-5-phosphate (DXP) to 2-C-methyl-D-erythritol 4-phosphate (MEP). This is 1-deoxy-D-xylulose 5-phosphate reductoisomerase from Pseudarthrobacter chlorophenolicus (strain ATCC 700700 / DSM 12829 / CIP 107037 / JCM 12360 / KCTC 9906 / NCIMB 13794 / A6) (Arthrobacter chlorophenolicus).